Consider the following 48-residue polypeptide: Large ribosomal subunit protein bL34 (48 aa).

This sequence belongs to the bacterial ribosomal protein bL34 family.

In Gloeothece citriformis (strain PCC 7424) (Cyanothece sp. (strain PCC 7424)), this protein is Large ribosomal subunit protein bL34.